Reading from the N-terminus, the 1135-residue chain is Retinoblastoma-like protein 2 (1135 aa).

The disordered stretch occupies residues 1–43; that stretch reads MASGGNQSPPPPPAAAASSEEEEEDGDAADRAQPAGSPSHQIQ. Position 410 is a phosphoserine (serine 410). Threonine 414 carries the phosphothreonine modification. The tract at residues 414-613 is domain A; that stretch reads TPVSTAAHSL…DRIRDNENRV (200 aa). The pocket; binds E1A stretch occupies residues 414–1021; it reads TPVSTAAHSL…QAFAMKYSQA (608 aa). O-linked (GlcNAc) serine glycosylation is present at serine 417. Residues 614–824 are spacer; the sequence is PTCEEVMPPQ…PGQPLTSSSI (211 aa). Position 636 is a phosphoserine (serine 636). A Phosphothreonine modification is found at threonine 639. A phosphoserine mark is found at serine 659, serine 669, serine 684, serine 942, serine 946, serine 960, serine 965, and serine 967. Composition is skewed to polar residues over residues 661 to 674, 683 to 692, 935 to 950, and 958 to 969; these read TTLY…TVST, DSPSEGSTSG, SGSS…PTEL, and DSSPVMRSNSTL. Disordered regions lie at residues 661–698 and 930–994; these read TTLY…PPQP and GKRR…VEEE. The interval 825 to 1021 is domain B; the sequence is RPRKTSSLAL…QAFAMKYSQA (197 aa). Threonine 968 carries the phosphothreonine modification. The span at 971–981 shows a compositional bias: pro residues; the sequence is VPQPSSAPPTP. 2 positions are modified to phosphoserine: serine 975 and serine 976. The residue at position 980 (threonine 980) is a Phosphothreonine. A phosphoserine mark is found at serine 1031, serine 1064, serine 1076, and serine 1108.

This sequence belongs to the retinoblastoma protein (RB) family. As to quaternary structure, interacts with AATF and RINT1. Component of the DREAM complex (also named LINC complex) at least composed of E2F4, E2F5, LIN9, LIN37, LIN52, LIN54, MYBL1, MYBL2, RBL1, RBL2, RBBP4, TFDP1 and TFDP2. The complex exists in quiescent cells where it represses cell cycle-dependent genes. It dissociates in S phase when LIN9, LIN37, LIN52 and LIN54 form a subcomplex that binds to MYBL2. Interacts with USP4. Interacts with KMT5B, KMT5C and USP4. Interacts with PML. Interacts with RBBP9. Interacts with CD53. Post-translationally, during G0 and early G1 phase of the cell cycle, phosphorylated on Ser-636 and on 5 sites within the domain B. Phosphorylation on Ser-669 in G1 leads to its ubiquitin-dependent proteolysis.

Its subcellular location is the nucleus. In terms of biological role, key regulator of entry into cell division. Directly involved in heterochromatin formation by maintaining overall chromatin structure and, in particular, that of constitutive heterochromatin by stabilizing histone methylation. Recruits and targets histone methyltransferases KMT5B and KMT5C, leading to epigenetic transcriptional repression. Controls histone H4 'Lys-20' trimethylation. Probably acts as a transcription repressor by recruiting chromatin-modifying enzymes to promoters. Potent inhibitor of E2F-mediated trans-activation, associates preferentially with E2F5. Binds to cyclins A and E. Binds to and may be involved in the transforming capacity of the adenovirus E1A protein. May act as a tumor suppressor. The protein is Retinoblastoma-like protein 2 (Rbl2) of Mus musculus (Mouse).